Consider the following 331-residue polypeptide: Meiotically up-regulated gene 172 protein (331 aa).

The stretch at 72-166 (IKNNEYEKQR…KGNYGLVKAR (95 aa)) forms a coiled coil.

This sequence belongs to the ADIP family.

Its subcellular location is the cytoplasm. Its function is as follows. Has a role in meiosis. This chain is Meiotically up-regulated gene 172 protein (mug172), found in Schizosaccharomyces pombe (strain 972 / ATCC 24843) (Fission yeast).